A 387-amino-acid chain; its full sequence is Cystathionine gamma-lyase (387 aa).

Substrate is bound by residues Arg53, Tyr105, and Arg110. Residue Lys202 is modified to N6-(pyridoxal phosphate)lysine. Glu329 is a substrate binding site.

It belongs to the trans-sulfuration enzymes family. As to quaternary structure, homotetramer. Interacts with CALM in a calcium-dependent manner. It depends on pyridoxal 5'-phosphate as a cofactor.

The protein resides in the cytoplasm. It carries out the reaction L,L-cystathionine + H2O = 2-oxobutanoate + L-cysteine + NH4(+). It catalyses the reaction L-cysteine + H2O = hydrogen sulfide + pyruvate + NH4(+) + H(+). The enzyme catalyses L-homocysteine + H2O = 2-oxobutanoate + hydrogen sulfide + NH4(+) + H(+). The catalysed reaction is L-homoserine = 2-oxobutanoate + NH4(+). It functions in the pathway amino-acid biosynthesis; L-cysteine biosynthesis; L-cysteine from L-homocysteine and L-serine: step 2/2. Its function is as follows. Catalyzes the last step in the trans-sulfuration pathway from L-methionine to L-cysteine in a pyridoxal-5'-phosphate (PLP)-dependent manner, which consists on cleaving the L,L-cystathionine molecule into L-cysteine, ammonia and 2-oxobutanoate. Part of the L-cysteine derived from the trans-sulfuration pathway is utilized for biosynthesis of the ubiquitous antioxidant glutathione. Besides its role in the conversion of L-cystathionine into L-cysteine, it utilizes L-cysteine and L-homocysteine as substrates (at much lower rates than L,L-cystathionine) to produce the endogenous gaseous signaling molecule hydrogen sulfide (H2S). This is Cystathionine gamma-lyase (cysA) from Dictyostelium discoideum (Social amoeba).